Reading from the N-terminus, the 172-residue chain is C-phycocyanin beta chain (172 aa).

The residue at position 72 (Asn-72) is an N4-methylasparagine. Positions 82 and 153 each coordinate (2R,3E)-phycocyanobilin.

The protein belongs to the phycobiliprotein family. As to quaternary structure, heterodimer of an alpha and a beta subunit, which further assembles into trimers and the trimers into hexamers. The basic functional unit of phycobiliproteins is a ring-shaped hexamer formed from two back-to-back trimers contacting via the alpha chain subunits. The trimers are composed of alpha/beta subunit heterodimers arranged around a three-fold axis of symmetry. The phycoerythrins also contain a gamma subunit which is located in the center of the hexamer. Post-translationally, contains two covalently linked bilin chromophores.

Its subcellular location is the plastid. The protein resides in the chloroplast thylakoid membrane. Its function is as follows. Light-harvesting photosynthetic bile pigment-protein from the phycobiliprotein complex (phycobilisome, PBS). Phycocyanin is the major phycobiliprotein in the PBS rod. The protein is C-phycocyanin beta chain (cpcB) of Aglaothamnion neglectum (Red alga).